Here is a 318-residue protein sequence, read N- to C-terminus: N-acetyl-gamma-glutamyl-phosphate reductase (318 aa).

The active site involves cysteine 132.

It belongs to the NAGSA dehydrogenase family. Type 1 subfamily.

The protein resides in the cytoplasm. The enzyme catalyses N-acetyl-L-glutamate 5-semialdehyde + phosphate + NADP(+) = N-acetyl-L-glutamyl 5-phosphate + NADPH + H(+). It functions in the pathway amino-acid biosynthesis; L-arginine biosynthesis; N(2)-acetyl-L-ornithine from L-glutamate: step 3/4. Catalyzes the NADPH-dependent reduction of N-acetyl-5-glutamyl phosphate to yield N-acetyl-L-glutamate 5-semialdehyde. This chain is N-acetyl-gamma-glutamyl-phosphate reductase, found in Azobacteroides pseudotrichonymphae genomovar. CFP2.